We begin with the raw amino-acid sequence, 201 residues long: Putative 3-methyladenine DNA glycosylase (201 aa).

This sequence belongs to the DNA glycosylase MPG family.

The polypeptide is Putative 3-methyladenine DNA glycosylase (Rhodopseudomonas palustris (strain HaA2)).